The chain runs to 395 residues: ETS-related transcription factor Elf-3 (395 aa).

Residues 69 to 155 (EPPAVLHLAE…AQLRDLTSSS (87 aa)) enclose the PNT domain. Low complexity predominate over residues 200–240 (ASPYYGSSYGPGAPSPGSSDFSTSGTDTPQSSHSSDSGGSD). A disordered region spans residues 200–275 (ASPYYGSSYG…HGKRKRGRPR (76 aa)). Residues 246–265 (TDSKVFPRDGFPDYKKGEPK) are compositionally biased toward basic and acidic residues. Basic residues predominate over residues 266–275 (HGKRKRGRPR). Residues 297–379 (THLWEFIRDI…DGRRLVYKFG (83 aa)) constitute a DNA-binding region (ETS).

Belongs to the ETS family. In terms of assembly, interacts with TBP. Interacts with CREBBP and EP300; these act as transcriptional coactivators of ELF3 and positively modulate its function. Interacts with XRCC5/KU86 and XRCC6/KU70; these inhibit the ability of ELF3 to bind DNA and negatively modulate its transcriptional activity. Associated with CLND7 and POU2F3. Interacts with ZNF768.

It localises to the cytoplasm. Its subcellular location is the nucleus. In terms of biological role, transcriptional activator that binds and transactivates ETS sequences containing the consensus nucleotide core sequence GGA[AT]. Acts synergistically with POU2F3 to transactivate the SPRR2A promoter and with RUNX1 to transactivate the ANGPT1 promoter. Also transactivates collagenase, CCL20, CLND7, FLG, KRT8, NOS2, PTGS2, SPRR2B, TGFBR2 and TGM3 promoters. Represses KRT4 promoter activity. Involved in mediating vascular inflammation. May play an important role in epithelial cell differentiation and tumorigenesis. May be a critical downstream effector of the ERBB2 signaling pathway. May be associated with mammary gland development and involution. Plays an important role in the regulation of transcription with TATA-less promoters in preimplantation embryos, which is essential in preimplantation development. The sequence is that of ETS-related transcription factor Elf-3 from Rattus norvegicus (Rat).